A 275-amino-acid polypeptide reads, in one-letter code: NH(3)-dependent NAD(+) synthetase (275 aa).

Residue 46–53 (GISGGQDS) coordinates ATP. Aspartate 52 contacts Mg(2+). Arginine 140 contacts deamido-NAD(+). Threonine 160 lines the ATP pocket. Glutamate 165 serves as a coordination point for Mg(2+). Residues lysine 173 and aspartate 180 each contribute to the deamido-NAD(+) site. Positions 189 and 211 each coordinate ATP. Residue 260-261 (HK) participates in deamido-NAD(+) binding.

The protein belongs to the NAD synthetase family. In terms of assembly, homodimer.

It carries out the reaction deamido-NAD(+) + NH4(+) + ATP = AMP + diphosphate + NAD(+) + H(+). It participates in cofactor biosynthesis; NAD(+) biosynthesis; NAD(+) from deamido-NAD(+) (ammonia route): step 1/1. Functionally, catalyzes the ATP-dependent amidation of deamido-NAD to form NAD. Uses ammonia as a nitrogen source. The protein is NH(3)-dependent NAD(+) synthetase of Salmonella agona (strain SL483).